Here is a 442-residue protein sequence, read N- to C-terminus: F-box/kelch-repeat protein OR23 (442 aa).

The F-box domain occupies Thr-37–Ser-84. Kelch repeat units follow at residues Leu-93–Ala-139, Tyr-145–Gly-200, Arg-204–Asn-257, Glu-269–Ala-328, Asp-330–Gly-377, and Leu-390–Met-437.

The sequence is that of F-box/kelch-repeat protein OR23 (OR23) from Arabidopsis thaliana (Mouse-ear cress).